Reading from the N-terminus, the 188-residue chain is Peptidyl-tRNA hydrolase (188 aa).

Tyr-14 is a tRNA binding site. His-19 acts as the Proton acceptor in catalysis. 3 residues coordinate tRNA: Tyr-64, Asn-66, and Asn-112.

This sequence belongs to the PTH family. As to quaternary structure, monomer.

The protein resides in the cytoplasm. It carries out the reaction an N-acyl-L-alpha-aminoacyl-tRNA + H2O = an N-acyl-L-amino acid + a tRNA + H(+). Functionally, hydrolyzes ribosome-free peptidyl-tRNAs (with 1 or more amino acids incorporated), which drop off the ribosome during protein synthesis, or as a result of ribosome stalling. In terms of biological role, catalyzes the release of premature peptidyl moieties from peptidyl-tRNA molecules trapped in stalled 50S ribosomal subunits, and thus maintains levels of free tRNAs and 50S ribosomes. In Clostridium tetani (strain Massachusetts / E88), this protein is Peptidyl-tRNA hydrolase.